The primary structure comprises 85 residues: Large ribosomal subunit protein bL27 (85 aa).

This sequence belongs to the bacterial ribosomal protein bL27 family.

The sequence is that of Large ribosomal subunit protein bL27 from Vesicomyosocius okutanii subsp. Calyptogena okutanii (strain HA).